Reading from the N-terminus, the 69-residue chain is DNA gyrase inhibitor YacG (69 aa).

Residues C13, C16, C32, and C36 each contribute to the Zn(2+) site.

This sequence belongs to the DNA gyrase inhibitor YacG family. In terms of assembly, interacts with GyrB. Requires Zn(2+) as cofactor.

Inhibits all the catalytic activities of DNA gyrase by preventing its interaction with DNA. Acts by binding directly to the C-terminal domain of GyrB, which probably disrupts DNA binding by the gyrase. In Neisseria meningitidis serogroup C / serotype 2a (strain ATCC 700532 / DSM 15464 / FAM18), this protein is DNA gyrase inhibitor YacG.